We begin with the raw amino-acid sequence, 1159 residues long: MTLSKTPPRIERFGDITEVIPLPNLTEVQVNSFKAFLQDDKAPDQREDVGLQSAFREVFPIDESEKGRSTGMVLDFIEYRLGEPEYSPEECREKDLTYEAPLYVKLELIHKDTGVIKGFKPDSPPESWVFLGNLPLMTFDGSFIINGADRVVISQIHRSPGVYFTSSYKGIKKQYTAAIIPMPKRGPWIELEFAGDVLEMKVNKRKFPVSLLLRVLGMDDASIRALFTEFTPEVEPGEDKSAGMGADEALLRLFTVLRPGDPPKRDKAIQYLFGLLADPRRYDLGEPGRFKMNTKLGVQRQERTLLKFEDGKFSDAGLVDTIRYLMALQQGLETVPMVDEDGVVTDVPVAEDDIDHLGNRRVRTVGELLADQLRVGMGRMARGVRERMLLGNPDAATPTKLVNNRPIVAAMREFFGRSQLSQFKDQTNPLSDLRHKRRISALGPGGLTRERAGFDVRDVHRTHYGRICPIETPEGANIGLISSLSSYAKVNDLGFIMAPYRKVEDGKVTNQVEYMTADIEDRYTIAQANSPLNEDNTFADERVLARRKGDPLLYTPDEVDYMDVSPKQIVSINTSLIPFLEHDDANRALMGSNMQSQAVPLVRADSPAVGTGVERRVVTDSGTSVVSDVNGRVSYVDARAIQVTLSEDHRELNMNAGNVRTFELIRFTRSNQGTNLDQHPIVSVGDEVKVGQVIADGPASERGRLALGQNITIAIMPFDGFNFEDAICINEDLVRQDFYTSVHIEKDEIEARDTKLGPEKITRDIPGLSEAALRDLDEDGIVRVGAEVKPGDILVGKTSFKGESEPTPEERLLRSIFGEKAREVKDTSLRVQSGQGGIVVKTVRFRRGDEGVDLKPGVREMVRVYVAQKRQLQVGDKVANRHGNKGVVSKIVRPEDMPYLEDGTPVDIVFNPLGVPSRMNLGQILETHLGEVARLTGQKFETPVFDSVTEATIKEMLEVAAAERLQARKDDGFELDKREQEVLDRAGKLGVIDAPGDDYEKGQMQLARTGKSILYDGRTGEPISGPVVVGIMYVMKLYHMVEDKLHARSTGPYSLITQQPLGGKAQFGGQRFGEMEVWALEAYGAAHVLQEMLTIKSDDIDGRDAAYQSIVKGEEVSGSTIPESFKVLVKELHSLGLDVEVLDHGDKAVDIFEGMMPKR.

Belongs to the RNA polymerase beta chain family. The RNAP catalytic core consists of 2 alpha, 1 beta, 1 beta' and 1 omega subunit. When a sigma factor is associated with the core the holoenzyme is formed, which can initiate transcription.

The catalysed reaction is RNA(n) + a ribonucleoside 5'-triphosphate = RNA(n+1) + diphosphate. Functionally, DNA-dependent RNA polymerase catalyzes the transcription of DNA into RNA using the four ribonucleoside triphosphates as substrates. The chain is DNA-directed RNA polymerase subunit beta from Deinococcus radiodurans (strain ATCC 13939 / DSM 20539 / JCM 16871 / CCUG 27074 / LMG 4051 / NBRC 15346 / NCIMB 9279 / VKM B-1422 / R1).